The following is a 227-amino-acid chain: Isopentenyl-diphosphate Delta-isomerase 1 (227 aa).

A substrate-binding site is contributed by lysine 36. 2 residues coordinate Mg(2+): histidine 40 and histidine 51. Positions 49 to 199 (LLHRAFSVFL…EIKITPWFQI (151 aa)) constitute a Nudix hydrolase domain. 2 residues coordinate substrate: arginine 70 and lysine 74. Cysteine 86 is an active-site residue. Serine 87 is a substrate binding site. The Mg(2+) site is built by glutamate 146 and glutamate 148. Residue glutamate 148 is part of the active site. Lysine 176 is subject to N6-acetyllysine. The Microbody targeting signal motif lies at 225-227 (HRM).

This sequence belongs to the IPP isomerase type 1 family. As to quaternary structure, monomer. The cofactor is Mg(2+).

Its subcellular location is the peroxisome. It carries out the reaction isopentenyl diphosphate = dimethylallyl diphosphate. It participates in isoprenoid biosynthesis; dimethylallyl diphosphate biosynthesis; dimethylallyl diphosphate from isopentenyl diphosphate: step 1/1. Catalyzes the 1,3-allylic rearrangement of the homoallylic substrate isopentenyl (IPP) to its highly electrophilic allylic isomer, dimethylallyl diphosphate (DMAPP). In Macaca fascicularis (Crab-eating macaque), this protein is Isopentenyl-diphosphate Delta-isomerase 1 (IDI1).